The following is a 1016-amino-acid chain: Mediator of RNA polymerase II transcription subunit 5 (1016 aa).

This sequence belongs to the Mediator complex subunit 5 family. As to quaternary structure, component of the Mediator complex.

It localises to the nucleus. Component of the Mediator complex, a coactivator involved in the regulated transcription of nearly all RNA polymerase II-dependent genes. Mediator functions as a bridge to convey information from gene-specific regulatory proteins to the basal RNA polymerase II transcription machinery. Mediator is recruited to promoters by direct interactions with regulatory proteins and serves as a scaffold for the assembly of a functional preinitiation complex with RNA polymerase II and the general transcription factors. This chain is Mediator of RNA polymerase II transcription subunit 5 (nut1), found in Aspergillus terreus (strain NIH 2624 / FGSC A1156).